A 78-amino-acid polypeptide reads, in one-letter code: Small ribosomal subunit protein bS18 (78 aa).

This sequence belongs to the bacterial ribosomal protein bS18 family. In terms of assembly, part of the 30S ribosomal subunit. Forms a tight heterodimer with protein bS6.

In terms of biological role, binds as a heterodimer with protein bS6 to the central domain of the 16S rRNA, where it helps stabilize the platform of the 30S subunit. The protein is Small ribosomal subunit protein bS18 of Nocardioides sp. (strain ATCC BAA-499 / JS614).